Consider the following 179-residue polypeptide: ATP synthase subunit b, chloroplastic (179 aa).

The chain crosses the membrane as a helical span at residues 35–51 (IVILGGGIFKLGSTALS).

The protein belongs to the ATPase B chain family. As to quaternary structure, F-type ATPases have 2 components, F(1) - the catalytic core - and F(0) - the membrane proton channel. F(1) has five subunits: alpha(3), beta(3), gamma(1), delta(1), epsilon(1). F(0) has four main subunits: a(1), b(1), b'(1) and c(10-14). The alpha and beta chains form an alternating ring which encloses part of the gamma chain. F(1) is attached to F(0) by a central stalk formed by the gamma and epsilon chains, while a peripheral stalk is formed by the delta, b and b' chains.

Its subcellular location is the plastid. The protein localises to the chloroplast thylakoid membrane. F(1)F(0) ATP synthase produces ATP from ADP in the presence of a proton or sodium gradient. F-type ATPases consist of two structural domains, F(1) containing the extramembraneous catalytic core and F(0) containing the membrane proton channel, linked together by a central stalk and a peripheral stalk. During catalysis, ATP synthesis in the catalytic domain of F(1) is coupled via a rotary mechanism of the central stalk subunits to proton translocation. Functionally, component of the F(0) channel, it forms part of the peripheral stalk, linking F(1) to F(0). This chain is ATP synthase subunit b, chloroplastic, found in Emiliania huxleyi (Coccolithophore).